Here is a 279-residue protein sequence, read N- to C-terminus: Putative hydro-lyase GDI0188/Gdia_2258 (279 aa).

It belongs to the D-glutamate cyclase family.

The protein is Putative hydro-lyase GDI0188/Gdia_2258 of Gluconacetobacter diazotrophicus (strain ATCC 49037 / DSM 5601 / CCUG 37298 / CIP 103539 / LMG 7603 / PAl5).